A 170-amino-acid chain; its full sequence is Small ribosomal subunit protein bS18c (170 aa).

Disordered regions lie at residues 1-59 and 151-170; these read MYIS…IGPG and NLRN…SSDC. 7 repeats span residues 4–10, 11–17, 18–24, 25–31, 32–38, 39–45, and 46–52; these read SKQPFRK, SKQTFHK, FKQPFRK, and SKQPFRR. The interval 4-52 is 7 X 7 AA tandem repeats; the sequence is SKQPFRKSKQPFRKSKQTFHKSKQPFRKFKQPFRKSKQPFRKSKQPFRR. Over residues 7-55 the composition is skewed to basic residues; the sequence is PFRKSKQPFRKSKQTFHKSKQPFRKFKQPFRKSKQPFRKSKQPFRRRSR.

Belongs to the bacterial ribosomal protein bS18 family. Part of the 30S ribosomal subunit.

It localises to the plastid. The protein localises to the chloroplast. The sequence is that of Small ribosomal subunit protein bS18c (rps18) from Zea mays (Maize).